A 426-amino-acid polypeptide reads, in one-letter code: MSKSENLYSAARELIPGGVNSPVRAFTGVGGTPLFIEKADGAYLYDVDGKAYIDYVGSWGPMVLGHNHPAIRNAVIEAAERGLSFGAPTEMEVKMAQLVTELVPTMDMVRMVNSGTEATMSAIRLARGFTGRDKIIKFEGCYHGHADCLLVKAGSGALTLGQPNSPGVPADFAKHTLTCTYNDLASVRAAFEQYPQEIACIIIEPVAGNMNCVPPLPDFLPGLRALCDEFGALLIIDEVMTGFRVALAGAQDYYGVEPDLTCLGKIIGGGMPVGAFGGRRDVMDALAPTGPVYQAGTLSGNPIAMAAGFACLNEVAQPGVHETLDELTTRLAEGLLEAAEEAGIPLVVNHVGGMFGIFFTDAESVTCYQDVMACDVERFKRFFHMMLDEGVYLAPSAFEAGFMSVAHSMEDINNTIDAARRVFAKL.

The residue at position 265 (lysine 265) is an N6-(pyridoxal phosphate)lysine.

The protein belongs to the class-III pyridoxal-phosphate-dependent aminotransferase family. HemL subfamily. In terms of assembly, homodimer. Pyridoxal 5'-phosphate serves as cofactor.

It localises to the cytoplasm. It catalyses the reaction (S)-4-amino-5-oxopentanoate = 5-aminolevulinate. It participates in porphyrin-containing compound metabolism; protoporphyrin-IX biosynthesis; 5-aminolevulinate from L-glutamyl-tRNA(Glu): step 2/2. The sequence is that of Glutamate-1-semialdehyde 2,1-aminomutase from Shigella sonnei (strain Ss046).